The chain runs to 73 residues: uncharacterized protein (73 aa).

A signal peptide spans 1–30; the sequence is MVDFYFIEEKVAYRAAFTTTGKIAATLGLA.

This is an uncharacterized protein from Archaeoglobus fulgidus (strain ATCC 49558 / DSM 4304 / JCM 9628 / NBRC 100126 / VC-16).